A 161-amino-acid polypeptide reads, in one-letter code: 2-C-methyl-D-erythritol 2,4-cyclodiphosphate synthase (161 aa).

2 residues coordinate a divalent metal cation: aspartate 10 and histidine 12. 4-CDP-2-C-methyl-D-erythritol 2-phosphate contacts are provided by residues 10-12 and 36-37; these read DVH and HS. Histidine 44 contacts a divalent metal cation. 4-CDP-2-C-methyl-D-erythritol 2-phosphate contacts are provided by residues 58-60, 63-67, 102-108, 134-137, phenylalanine 141, and arginine 144; these read DIG, FPDTD, AQAPKMA, and TTTE.

Belongs to the IspF family. Homotrimer. Requires a divalent metal cation as cofactor.

The catalysed reaction is 4-CDP-2-C-methyl-D-erythritol 2-phosphate = 2-C-methyl-D-erythritol 2,4-cyclic diphosphate + CMP. It functions in the pathway isoprenoid biosynthesis; isopentenyl diphosphate biosynthesis via DXP pathway; isopentenyl diphosphate from 1-deoxy-D-xylulose 5-phosphate: step 4/6. Functionally, involved in the biosynthesis of isopentenyl diphosphate (IPP) and dimethylallyl diphosphate (DMAPP), two major building blocks of isoprenoid compounds. Catalyzes the conversion of 4-diphosphocytidyl-2-C-methyl-D-erythritol 2-phosphate (CDP-ME2P) to 2-C-methyl-D-erythritol 2,4-cyclodiphosphate (ME-CPP) with a corresponding release of cytidine 5-monophosphate (CMP). This chain is 2-C-methyl-D-erythritol 2,4-cyclodiphosphate synthase, found in Shewanella baltica (strain OS155 / ATCC BAA-1091).